We begin with the raw amino-acid sequence, 605 residues long: Insulin-like growth factor-binding protein complex acid labile subunit (605 aa).

Positions 1–27 (MALRKGGLALALLLLSWVALGPRSLEG) are cleaved as a signal peptide. The 43-residue stretch at 32-74 (TPGEAEGPACPAACVCSYDDDADELSVFCSSRNLTRLPDGVPG) folds into the LRRNT domain. Cystine bridges form between cysteine 41–cysteine 47 and cysteine 45–cysteine 60. Residues asparagine 64, asparagine 85, and asparagine 96 are each glycosylated (N-linked (GlcNAc...) asparagine). 19 LRR repeats span residues 75 to 96 (GTQA…AFQN), 99 to 120 (SLGF…ALLG), 123 to 144 (NLCH…TFAH), 147 to 168 (ALAS…LFEG), 171 to 192 (SLWD…AFRG), 195 to 216 (SLRE…LFSG), 219 to 240 (ELRE…VFVQ), 243 to 264 (RLQK…AFLG), 267 to 288 (ALRW…TFPG), 291 to 312 (GLRV…TFKD), 315 to 336 (FLEE…SFEG), 339 to 360 (QLEV…AFLG), 363 to 384 (NVAV…VFRG), 387 to 408 (KLHS…TFTG), 411 to 432 (GLRR…SLWG), 435 to 456 (ELLE…LFQG), 459 to 480 (KLEY…ALGP), 483 to 504 (RAFW…LLAP), and 507 to 528 (RLRY…PPGL). N-linked (GlcNAc...) asparagine glycosylation is present at asparagine 368. A glycan (N-linked (GlcNAc...) asparagine) is linked at asparagine 515. Residues 536 to 605 (NPWDCGCPLK…DLSEAHFAPC (70 aa)) form the LRRCT domain. Cystine bridges form between cysteine 540-cysteine 583, cysteine 542-cysteine 605, and cysteine 566-cysteine 571. Asparagine 580 carries an N-linked (GlcNAc...) asparagine glycan.

In terms of assembly, forms a ternary complex with IGF1 and IGFBP3. Plasma.

It is found in the secreted. The protein localises to the extracellular space. Its function is as follows. Involved in protein-protein interactions that result in protein complexes, receptor-ligand binding or cell adhesion. This chain is Insulin-like growth factor-binding protein complex acid labile subunit (IGFALS), found in Homo sapiens (Human).